The following is an 882-amino-acid chain: Alanine--tRNA ligase (882 aa).

Residues His-571, His-575, Cys-673, and His-677 each contribute to the Zn(2+) site.

It belongs to the class-II aminoacyl-tRNA synthetase family. It depends on Zn(2+) as a cofactor.

The protein localises to the cytoplasm. The catalysed reaction is tRNA(Ala) + L-alanine + ATP = L-alanyl-tRNA(Ala) + AMP + diphosphate. Its function is as follows. Catalyzes the attachment of alanine to tRNA(Ala) in a two-step reaction: alanine is first activated by ATP to form Ala-AMP and then transferred to the acceptor end of tRNA(Ala). Also edits incorrectly charged Ser-tRNA(Ala) and Gly-tRNA(Ala) via its editing domain. This is Alanine--tRNA ligase from Stenotrophomonas maltophilia (strain K279a).